A 74-amino-acid chain; its full sequence is Protein F9 homolog (74 aa).

Over 1 to 34 (GHAAANCALARVATALTRRVPASRHGLAEGGTPP) the chain is Virion surface. Residues 35 to 55 (WTLLLAVAAVAVLGVVAISLL) traverse the membrane as a helical segment. The Intravirion segment spans residues 56-73 (RRALRIRFRYSKSIQTLR).

Belongs to the chordopoxvirinae L1 protein family.

Its subcellular location is the virion membrane. The protein is Protein F9 homolog of Capra hircus (Goat).